We begin with the raw amino-acid sequence, 122 residues long: Basic phospholipase A2 homolog (122 aa).

Disulfide bonds link cysteine 26-cysteine 116, cysteine 28-cysteine 44, cysteine 43-cysteine 96, cysteine 49-cysteine 122, cysteine 50-cysteine 89, cysteine 57-cysteine 82, and cysteine 75-cysteine 87. Positions 106–117 (KKHRVTVKFLCK) are important for membrane-damaging activities in eukaryotes and bacteria; heparin-binding.

This sequence belongs to the phospholipase A2 family. Group II subfamily. K49 sub-subfamily. In terms of assembly, homodimer; non-covalently linked. Expressed by the venom gland.

It is found in the secreted. In terms of biological role, snake venom phospholipase A2 (PLA2) that has almost no phospholipase A2 activity. Is myotoxic. Displays edema-inducing activities. A model of myotoxic mechanism has been proposed: an apo Lys49-PLA2 is activated by the entrance of a hydrophobic molecule (e.g. fatty acid) at the hydrophobic channel of the protein leading to a reorientation of a monomer. This reorientation causes a transition between 'inactive' to 'active' states, causing alignment of C-terminal and membrane-docking sites (MDoS) side-by-side and putting the membrane-disruption sites (MDiS) in the same plane, exposed to solvent and in a symmetric position for both monomers. The MDoS region stabilizes the toxin on membrane by the interaction of charged residues with phospholipid head groups. Subsequently, the MDiS region destabilizes the membrane with penetration of hydrophobic residues. This insertion causes a disorganization of the membrane, allowing an uncontrolled influx of ions (i.e. calcium and sodium), and eventually triggering irreversible intracellular alterations and cell death. This Protobothrops mucrosquamatus (Taiwan habu) protein is Basic phospholipase A2 homolog.